We begin with the raw amino-acid sequence, 278 residues long: Methyltransferase adrK (278 aa).

Residues 124–125, 151–152, and 152–153 each bind S-adenosyl-L-methionine; these read DL, DV, and VL.

This sequence belongs to the class I-like SAM-binding methyltransferase superfamily. As to quaternary structure, homodimer.

Its pathway is secondary metabolite biosynthesis; terpenoid biosynthesis. Methyltransferase; part of the gene cluster that mediates the biosynthesis of andrastins, meroterpenoid compounds that exhibit inhibitory activity against ras farnesyltransferase, suggesting that they could be promising leads for antitumor agents. The first step of the pathway is the synthesis of 3,5-dimethylorsellinic acid (DMOA) by the polyketide synthase adrD via condensation of one acetyl-CoA starter unit with 3 malonyl-CoA units and 2 methylations. DMAO is then converted to farnesyl-DMAO by the prenyltransferase adrG. The methyltransferase adrK catalyzes the methylation of the carboxyl group of farnesyl-DMAO to farnesyl-DMAO methyl ester which is further converted to epoxyfarnesyl-DMAO methyl ester by the FAD-dependent monooxygenase adrH. The terpene cyclase adrI then catalyzes the carbon skeletal rearrangement to generate the andrastin E, the first compound in the pathway having the andrastin scaffold, with the tetracyclic ring system. The post-cyclization tailoring enzymes adrF, adrE, adrJ, and adrA, are involved in the conversion of andrastin E into andrastin A. The short chain dehydrogenase adrF is responsible for the oxidation of the C-3 a hydroxyl group of andrastin E to yield the corresponding ketone, andrastin D. The ketoreductase adrE stereoselectively reduces the carbonyl moiety to reverse the stereochemistry of the C-3 position to yield andrastin F. The acetyltransferase adrJ is the acetyltransferase that attaches the acetyl group to the C-3 hydroxyl group of andrastin F to yield andrastin C. Finally, the cytochrome P450 monooxygenase adrA catalyzes two sequential oxidation reactions of the C-23 methyl group, to generate the corresponding alcohol andrastin B, and aldehyde andrastin A. The protein is Methyltransferase adrK of Penicillium roqueforti.